Consider the following 329-residue polypeptide: Phenylalanine--tRNA ligase alpha subunit (329 aa).

Position 253 (Glu-253) interacts with Mg(2+).

The protein belongs to the class-II aminoacyl-tRNA synthetase family. Phe-tRNA synthetase alpha subunit type 1 subfamily. In terms of assembly, tetramer of two alpha and two beta subunits. Requires Mg(2+) as cofactor.

Its subcellular location is the cytoplasm. It catalyses the reaction tRNA(Phe) + L-phenylalanine + ATP = L-phenylalanyl-tRNA(Phe) + AMP + diphosphate + H(+). The polypeptide is Phenylalanine--tRNA ligase alpha subunit (Teredinibacter turnerae (strain ATCC 39867 / T7901)).